The following is a 125-amino-acid chain: MARIASVNIPDNKRLVVSLTYIYGLGSTMAAEICNKAKISKDKKVKVLTDQELISLRNIIENEYKVEGDLKREVTLNIKKKKDIRCYQGLRHIRKLPVRGQNTHSNARTRKGKAIAIAGKKKTVK.

This sequence belongs to the universal ribosomal protein uS13 family. In terms of assembly, part of the 30S ribosomal subunit. Forms a loose heterodimer with protein S19. Forms two bridges to the 50S subunit in the 70S ribosome.

Its function is as follows. Located at the top of the head of the 30S subunit, it contacts several helices of the 16S rRNA. In the 70S ribosome it contacts the 23S rRNA (bridge B1a) and protein L5 of the 50S subunit (bridge B1b), connecting the 2 subunits; these bridges are implicated in subunit movement. Contacts the tRNAs in the A and P-sites. The chain is Small ribosomal subunit protein uS13 from Rickettsia prowazekii (strain Madrid E).